The primary structure comprises 1375 residues: DNA-directed RNA polymerase subunit beta' (1375 aa).

The Zn(2+) site is built by Cys-70, Cys-72, Cys-85, and Cys-88. Residues Asp-461, Asp-463, and Asp-465 each coordinate Mg(2+). Zn(2+) is bound by residues Cys-797, Cys-871, Cys-878, and Cys-881.

The protein belongs to the RNA polymerase beta' chain family. In terms of assembly, the RNAP catalytic core consists of 2 alpha, 1 beta, 1 beta' and 1 omega subunit. When a sigma factor is associated with the core the holoenzyme is formed, which can initiate transcription. Mg(2+) is required as a cofactor. The cofactor is Zn(2+).

It carries out the reaction RNA(n) + a ribonucleoside 5'-triphosphate = RNA(n+1) + diphosphate. In terms of biological role, DNA-dependent RNA polymerase catalyzes the transcription of DNA into RNA using the four ribonucleoside triphosphates as substrates. In Neorickettsia sennetsu (strain ATCC VR-367 / Miyayama) (Ehrlichia sennetsu), this protein is DNA-directed RNA polymerase subunit beta'.